A 185-amino-acid polypeptide reads, in one-letter code: Ribosome-recycling factor (185 aa).

Residues 144 to 164 (KEGEAGEDEVGRAEKDLDKTT) are disordered.

It belongs to the RRF family.

Its subcellular location is the cytoplasm. Responsible for the release of ribosomes from messenger RNA at the termination of protein biosynthesis. May increase the efficiency of translation by recycling ribosomes from one round of translation to another. The chain is Ribosome-recycling factor from Mycobacterium tuberculosis (strain CDC 1551 / Oshkosh).